The sequence spans 520 residues: Keratin, type II cytoskeletal 72 (520 aa).

Residues 1 to 133 (MSRQLTLYPG…DPEIQKVRAQ (133 aa)) form a head region. The tract at residues 134–169 (EREQIKALNNKFASFIDKVRFLEQQNQVLETKWELL) is coil 1A. The IF rod domain occupies 134-447 (EREQIKALNN…KLLESEESRM (314 aa)). Residues 170–188 (QQLDQNNSRRSLEPVHESY) form a linker 1 region. Positions 189 to 280 (ISNLQKQLEI…VLFEGEIAQM (92 aa)) are coil 1B. The segment at 281-304 (QSHISDTSVILSMDNNRQLDLDSI) is linker 12. Residues 305-443 (LAEVRAQYEE…ATYRKLLESE (139 aa)) are coil 2. Positions 444–520 (ESRMAGEYPS…SSCVSKKASR (77 aa)) are tail. The segment at 495 to 520 (GSCGSELKDPPAKTSASSCVSKKASR) is disordered.

Belongs to the intermediate filament family. In terms of assembly, heterotetramer of two type I and two type II keratins.

Functionally, has a role in hair formation. Specific component of keratin intermediate filaments in the inner root sheath (IRS) of the hair follicle. This Rattus norvegicus (Rat) protein is Keratin, type II cytoskeletal 72 (Krt72).